The following is a 286-amino-acid chain: Shikimate dehydrogenase (NADP(+)) (286 aa).

Shikimate is bound by residues Ser-22–Ser-24 and Thr-71. Lys-75 serves as the catalytic Proton acceptor. Glu-87 contacts NADP(+). 2 residues coordinate shikimate: Asn-96 and Asp-111. NADP(+) is bound by residues Gly-136–Ala-140, Asn-160–Arg-165, and Ile-225. Tyr-227 is a binding site for shikimate. Gly-248 serves as a coordination point for NADP(+).

Belongs to the shikimate dehydrogenase family. In terms of assembly, homodimer.

The catalysed reaction is shikimate + NADP(+) = 3-dehydroshikimate + NADPH + H(+). It participates in metabolic intermediate biosynthesis; chorismate biosynthesis; chorismate from D-erythrose 4-phosphate and phosphoenolpyruvate: step 4/7. Its function is as follows. Involved in the biosynthesis of the chorismate, which leads to the biosynthesis of aromatic amino acids. Catalyzes the reversible NADPH linked reduction of 3-dehydroshikimate (DHSA) to yield shikimate (SA). This chain is Shikimate dehydrogenase (NADP(+)), found in Sinorhizobium medicae (strain WSM419) (Ensifer medicae).